Reading from the N-terminus, the 305-residue chain is Aspartate carbamoyltransferase catalytic subunit (305 aa).

Residues Arg-52 and Thr-53 each coordinate carbamoyl phosphate. Lys-80 is a binding site for L-aspartate. Residues Arg-102, His-132, and Gln-135 each coordinate carbamoyl phosphate. Residues Arg-165 and Arg-217 each contribute to the L-aspartate site. Carbamoyl phosphate contacts are provided by Ala-258 and Pro-259.

This sequence belongs to the aspartate/ornithine carbamoyltransferase superfamily. ATCase family. In terms of assembly, heterododecamer (2C3:3R2) of six catalytic PyrB chains organized as two trimers (C3), and six regulatory PyrI chains organized as three dimers (R2).

It carries out the reaction carbamoyl phosphate + L-aspartate = N-carbamoyl-L-aspartate + phosphate + H(+). The protein operates within pyrimidine metabolism; UMP biosynthesis via de novo pathway; (S)-dihydroorotate from bicarbonate: step 2/3. Catalyzes the condensation of carbamoyl phosphate and aspartate to form carbamoyl aspartate and inorganic phosphate, the committed step in the de novo pyrimidine nucleotide biosynthesis pathway. The sequence is that of Aspartate carbamoyltransferase catalytic subunit from Latilactobacillus sakei subsp. sakei (strain 23K) (Lactobacillus sakei subsp. sakei).